We begin with the raw amino-acid sequence, 384 residues long: Putative glycosyltransferase EpsF (384 aa).

The protein belongs to the glycosyltransferase group 1 family. Glycosyltransferase 4 subfamily.

Functionally, may be involved in the production of the exopolysaccharide (EPS) component of the extracellular matrix during biofilm formation. EPS is responsible for the adhesion of chains of cells into bundles. Required for biofilm maintenance. The polypeptide is Putative glycosyltransferase EpsF (epsF) (Bacillus subtilis (strain 168)).